The following is a 250-amino-acid chain: Adenosylcobinamide-GDP ribazoletransferase (250 aa).

Transmembrane regions (helical) follow at residues 33–53 (IASY…LFYI), 63–83 (IVMT…HIDG), 109–129 (LGTN…LFLT), 137–157 (LTAL…SMMI), 180–200 (FAIA…LAVF), and 203–223 (ILTI…LRIG).

Belongs to the CobS family. Requires Mg(2+) as cofactor.

It is found in the cell membrane. It catalyses the reaction alpha-ribazole + adenosylcob(III)inamide-GDP = adenosylcob(III)alamin + GMP + H(+). The catalysed reaction is alpha-ribazole 5'-phosphate + adenosylcob(III)inamide-GDP = adenosylcob(III)alamin 5'-phosphate + GMP + H(+). It participates in cofactor biosynthesis; adenosylcobalamin biosynthesis; adenosylcobalamin from cob(II)yrinate a,c-diamide: step 7/7. Joins adenosylcobinamide-GDP and alpha-ribazole to generate adenosylcobalamin (Ado-cobalamin). Also synthesizes adenosylcobalamin 5'-phosphate from adenosylcobinamide-GDP and alpha-ribazole 5'-phosphate. The chain is Adenosylcobinamide-GDP ribazoletransferase from Thermoanaerobacter sp. (strain X514).